Consider the following 106-residue polypeptide: uncharacterized protein (106 aa).

Positions 1-93 (MSIFYVLGKK…WEAKWKEAKI (93 aa)) constitute an HTH hxlR-type domain.

This is an uncharacterized protein from Methanocaldococcus jannaschii (strain ATCC 43067 / DSM 2661 / JAL-1 / JCM 10045 / NBRC 100440) (Methanococcus jannaschii).